The sequence spans 248 residues: MATKAPEKITKPKDRDFLNHLETYLSKRDGVDKLLKISRYATKIILASSLIPETRSIIPRLKSFESSVGVSRKAFRLGKFVQDINALRSSRWDSNHELVLLIIAYGGEGLYYFVEQFIWLTKSGLIDAKHSKWLQKISAWAELVGYVGSVSIKIRDLRKLNDEESCVASTIEISVSRGLACDGEDEKMKMIKEKKTLKVLSILQDLADGLMTIADIRDGKGVLSAPNVISSAGLFSAIVSTHKNWISC.

The Cytoplasmic portion of the chain corresponds to 1-97 (MATKAPEKIT…RSSRWDSNHE (97 aa)). Residues 98–118 (LVLLIIAYGGEGLYYFVEQFI) traverse the membrane as a helical segment. Residues 119-220 (WLTKSGLIDA…MTIADIRDGK (102 aa)) are Lumenal-facing. A helical transmembrane segment spans residues 221-241 (GVLSAPNVISSAGLFSAIVST). At 242 to 248 (HKNWISC) the chain is on the cytoplasmic side.

It belongs to the peroxin-11 family. Homooligomer. Interacts with ARC5 and FIS1B on peroxisomes. In terms of tissue distribution, expressed in developing siliques.

It is found in the peroxisome membrane. Functionally, involved in peroxisomal proliferation. Promotes peroxisomal duplication, aggregation or elongation without fission. In Arabidopsis thaliana (Mouse-ear cress), this protein is Peroxisomal membrane protein 11A (PEX11A).